We begin with the raw amino-acid sequence, 191 residues long: Ferric nitrobindin-like protein (191 aa).

The short motif at 20-26 is the GXWXGXG element; sequence GDWAGAG.

The protein belongs to the nitrobindin family.

This chain is Ferric nitrobindin-like protein, found in Streptomyces coelicolor (strain ATCC BAA-471 / A3(2) / M145).